The sequence spans 103 residues: Glutaredoxin-C1 (103 aa).

One can recognise a Glutaredoxin domain in the interval 1–102 (MDRVNRLAAQ…PLLRNAGALW (102 aa)). Cysteines 21 and 24 form a disulfide.

It belongs to the glutaredoxin family. CC-type subfamily.

It is found in the cytoplasm. Its function is as follows. Has a glutathione-disulfide oxidoreductase activity in the presence of NADPH and glutathione reductase. Reduces low molecular weight disulfides and proteins. This chain is Glutaredoxin-C1 (GRXC1), found in Oryza sativa subsp. japonica (Rice).